The sequence spans 205 residues: MIGKLTGLVDSQGEDHVILDVQGVGYIVFCSSRTLRLLPKPGASTALLIEMQVREDAIRLFGFPSEVERDWFRLLQSVQGVGAKVALALQGLLSATELAQAIALQDKASLGRAPGVGPKLAARLITELKDKMPALGPVDSLTAKLTIAEAEGTAPVAAQDAITALVNLGYGRPQAAAAVATSLEALGETAPLADLIRRGLKELAR.

Residues Met1–Pro64 are domain I. The domain II stretch occupies residues Ser65 to Ala143. The interval Lys144 to Thr153 is flexible linker. The segment at Thr153–Arg205 is domain III.

It belongs to the RuvA family. In terms of assembly, homotetramer. Forms an RuvA(8)-RuvB(12)-Holliday junction (HJ) complex. HJ DNA is sandwiched between 2 RuvA tetramers; dsDNA enters through RuvA and exits via RuvB. An RuvB hexamer assembles on each DNA strand where it exits the tetramer. Each RuvB hexamer is contacted by two RuvA subunits (via domain III) on 2 adjacent RuvB subunits; this complex drives branch migration. In the full resolvosome a probable DNA-RuvA(4)-RuvB(12)-RuvC(2) complex forms which resolves the HJ.

The protein resides in the cytoplasm. Its function is as follows. The RuvA-RuvB-RuvC complex processes Holliday junction (HJ) DNA during genetic recombination and DNA repair, while the RuvA-RuvB complex plays an important role in the rescue of blocked DNA replication forks via replication fork reversal (RFR). RuvA specifically binds to HJ cruciform DNA, conferring on it an open structure. The RuvB hexamer acts as an ATP-dependent pump, pulling dsDNA into and through the RuvAB complex. HJ branch migration allows RuvC to scan DNA until it finds its consensus sequence, where it cleaves and resolves the cruciform DNA. The chain is Holliday junction branch migration complex subunit RuvA from Beijerinckia indica subsp. indica (strain ATCC 9039 / DSM 1715 / NCIMB 8712).